Reading from the N-terminus, the 650-residue chain is Methionine--tRNA ligase (650 aa).

Residues 11 to 21 (YYVNDIPHIGH) carry the 'HIGH' region motif. Cys126, Cys129, Cys147, and Cys150 together coordinate Zn(2+). The 'KMSKS' region signature appears at 301-305 (KMSKS). Lys304 is an ATP binding site. A disordered region spans residues 513–535 (EKTEKAGEASPEKNEKEKKDAKE). The tRNA-binding domain maps to 549-650 (DFKKVEIKVG…REKIAGSLIS (102 aa)).

It belongs to the class-I aminoacyl-tRNA synthetase family. MetG type 2A subfamily. In terms of assembly, homodimer. It depends on Zn(2+) as a cofactor.

The protein localises to the cytoplasm. It carries out the reaction tRNA(Met) + L-methionine + ATP = L-methionyl-tRNA(Met) + AMP + diphosphate. Its function is as follows. Is required not only for elongation of protein synthesis but also for the initiation of all mRNA translation through initiator tRNA(fMet) aminoacylation. This chain is Methionine--tRNA ligase (metG), found in Helicobacter pylori (strain ATCC 700392 / 26695) (Campylobacter pylori).